The primary structure comprises 205 residues: Small ribosomal subunit protein uS4 (205 aa).

Over residues methionine 1–glycine 16 the composition is skewed to basic and acidic residues. Residues methionine 1–serine 46 form a disordered region. Positions serine 94–valine 157 constitute an S4 RNA-binding domain.

The protein belongs to the universal ribosomal protein uS4 family. As to quaternary structure, part of the 30S ribosomal subunit. Contacts protein S5. The interaction surface between S4 and S5 is involved in control of translational fidelity.

Functionally, one of the primary rRNA binding proteins, it binds directly to 16S rRNA where it nucleates assembly of the body of the 30S subunit. With S5 and S12 plays an important role in translational accuracy. This Brucella abortus (strain S19) protein is Small ribosomal subunit protein uS4.